The following is a 216-amino-acid chain: Probable nicotinate-nucleotide adenylyltransferase (216 aa).

The protein belongs to the NadD family.

The catalysed reaction is nicotinate beta-D-ribonucleotide + ATP + H(+) = deamido-NAD(+) + diphosphate. The protein operates within cofactor biosynthesis; NAD(+) biosynthesis; deamido-NAD(+) from nicotinate D-ribonucleotide: step 1/1. In terms of biological role, catalyzes the reversible adenylation of nicotinate mononucleotide (NaMN) to nicotinic acid adenine dinucleotide (NaAD). The protein is Probable nicotinate-nucleotide adenylyltransferase of Marinobacter nauticus (strain ATCC 700491 / DSM 11845 / VT8) (Marinobacter aquaeolei).